The following is a 227-amino-acid chain: 7-cyano-7-deazaguanine synthase (227 aa).

Position 9 to 19 (9 to 19 (LSGGLDSATVL)) interacts with ATP. 4 residues coordinate Zn(2+): Cys-189, Cys-199, Cys-202, and Cys-205.

Belongs to the QueC family. Zn(2+) serves as cofactor.

The catalysed reaction is 7-carboxy-7-deazaguanine + NH4(+) + ATP = 7-cyano-7-deazaguanine + ADP + phosphate + H2O + H(+). It participates in purine metabolism; 7-cyano-7-deazaguanine biosynthesis. Functionally, catalyzes the ATP-dependent conversion of 7-carboxy-7-deazaguanine (CDG) to 7-cyano-7-deazaguanine (preQ(0)). The polypeptide is 7-cyano-7-deazaguanine synthase (Cupriavidus necator (strain ATCC 17699 / DSM 428 / KCTC 22496 / NCIMB 10442 / H16 / Stanier 337) (Ralstonia eutropha)).